The primary structure comprises 210 residues: Cancer/testis antigen 2 (210 aa).

Composition is skewed to gly residues over residues 1-47 (MQAE…GPRG) and 56-66 (PRGGAPRGPHG). 2 disordered regions span residues 1–80 (MQAE…PCGA) and 154–197 (GLGS…DGCR). The span at 163-177 (QKARDLRTPKHKVSE) shows a compositional bias: basic and acidic residues.

Belongs to the CTAG/PCC1 family. Testis and very low level in placenta and in some uterus samples. Observed in 25-50% of tumor samples of melanomas, non-small-cell lung carcinomas, bladder, prostate and head and neck cancers.

This Homo sapiens (Human) protein is Cancer/testis antigen 2 (CTAG2).